Reading from the N-terminus, the 508-residue chain is Purine-cytosine permease fcyB (508 aa).

The Cytoplasmic portion of the chain corresponds to 1 to 72 (MAGAFDFDLE…AEQTDTSVFN (72 aa)). The helical transmembrane segment at 73–93 (IGSMWLAANMVVSSFAIGVLG) threads the bilayer. The Extracellular segment spans residues 94–104 (KSVYSLGFVDA). A helical membrane pass occupies residues 105-125 (ILTVLFFNLLGIMTVCFFSCF). Topologically, residues 126-147 (GPFGLRQMVFSRLWFGWYVTKG) are cytoplasmic. A helical transmembrane segment spans residues 148–168 (FAVLNILACLGWSAANAIVGA). Residues 169-177 (QMLHAVNSD) are Extracellular-facing. A helical transmembrane segment spans residues 178–198 (VPGFAAILIISICTLLVTFAG). Residues 199 to 200 (YK) lie on the Cytoplasmic side of the membrane. The helical transmembrane segment at 201–221 (VVHLYEYWSWIPTFIVFMIIL) threads the bilayer. Residues 222-243 (GTFAHSGDFQNIPMGVGTSEMG) are Extracellular-facing. The chain crosses the membrane as a helical span at residues 244–264 (SVLSFGSAVYGFATGWTSYAA). At 265-278 (DYTVYQPANRSKRK) the chain is on the cytoplasmic side. Residues 279–299 (IFLSTWLGLIVPLLFVEMLGV) form a helical membrane-spanning segment. Residues 300 to 323 (AVMTATDIKGSKYDVGYATSGNGG) are Extracellular-facing. The helical transmembrane segment at 324-344 (LIAAVLQPLGGFGDFCLVILA) threads the bilayer. Over 345–374 (LSIVANNCPNFYSVALTVQVLSRYAQRVPR) the chain is Cytoplasmic. Residues 375–395 (FIWTLFGTGVSIAIAIPGYSH) traverse the membrane as a helical segment. Over 396-404 (FETVLENFM) the chain is Extracellular. The helical transmembrane segment at 405–425 (NFIAYWLAIYSAIAIMDHFVF) threads the bilayer. The Cytoplasmic segment spans residues 426–442 (KRGFSGYVVENFDKREK). A helical membrane pass occupies residues 443 to 463 (LPVGIAATIAFGFGVAGMITG). Topologically, residues 464-477 (MSQPWYVGPIARHA) are extracellular. A helical transmembrane segment spans residues 478 to 498 (AGGDVGFELGFAFAAFSYLCL). Over 499–508 (RPFEIKFFGR) the chain is Cytoplasmic.

It belongs to the purine-cytosine permease (2.A.39) family.

It localises to the cell membrane. This permease has a broad specificity towards purines, and also transports cytosine, but neither uracil nor thymine. Contributes very little in purine uptake. Its major role may be the uptake of cytosine. This Emericella nidulans (strain FGSC A4 / ATCC 38163 / CBS 112.46 / NRRL 194 / M139) (Aspergillus nidulans) protein is Purine-cytosine permease fcyB (fcyB).